Consider the following 275-residue polypeptide: NAD kinase (275 aa).

D68 (proton acceptor) is an active-site residue. NAD(+)-binding positions include 68-69 (DG), R73, 136-137 (NE), K147, R164, D166, 177-182 (TAYAMS), A201, and Q236.

This sequence belongs to the NAD kinase family. Requires a divalent metal cation as cofactor.

Its subcellular location is the cytoplasm. The catalysed reaction is NAD(+) + ATP = ADP + NADP(+) + H(+). Its function is as follows. Involved in the regulation of the intracellular balance of NAD and NADP, and is a key enzyme in the biosynthesis of NADP. Catalyzes specifically the phosphorylation on 2'-hydroxyl of the adenosine moiety of NAD to yield NADP. The polypeptide is NAD kinase (Methanosarcina acetivorans (strain ATCC 35395 / DSM 2834 / JCM 12185 / C2A)).